We begin with the raw amino-acid sequence, 353 residues long: MTIAIGKSSEQPKGLFDSMDDWLRRDRFVFVGWSGLLLFPCAYFALGGWLTGTTFVTSWYTHGLASSYLEGCNFLTAAVSTPANSLSHSLLLLWGPEAQGDFTRWCQLGGLWTFVALHGAFGLIGFMLRQFELARSVQLRPYNALAFSGPIAVFVSVFLIYPLGQSGWFFAPSFGVAAIFRFILFFQGFHNWTLNPFHMMGVAGVLGAALLCAIHGATVENTLFEDGDGANTFRAFNPTQAEETYSMVTANRFWSQIFGVAFSNKRWLHFFMLFVPVTGLWMSAIGVVGLALNLRAYDFVSQEIRAAEDPEFETFYTKNILLNEGIRAWMAAQDQPHENLVFPEEVLPRGNAL.

Residue threonine 2 is modified to N-acetylthreonine. Threonine 2 is subject to Phosphothreonine. Residues cysteine 41–threonine 61 traverse the membrane as a helical segment. Residue histidine 118 coordinates chlorophyll a. The helical transmembrane segment at glycine 125 to proline 141 threads the bilayer. Glutamine 130 and asparagine 143 together coordinate pheophytin a. The chain crosses the membrane as a helical span at residues valine 153 to serine 166. Histidine 198 provides a ligand contact to chlorophyll a. A helical transmembrane segment spans residues alanine 208–aspartate 228. A plastoquinone-binding residues include histidine 215 and phenylalanine 262. Histidine 215 provides a ligand contact to Fe cation. A Fe cation-binding site is contributed by histidine 269. Residues glycine 279 to arginine 295 form a helical membrane-spanning segment.

It belongs to the reaction center PufL/M/PsbA/D family. In terms of assembly, PSII is composed of 1 copy each of membrane proteins PsbA, PsbB, PsbC, PsbD, PsbE, PsbF, PsbH, PsbI, PsbJ, PsbK, PsbL, PsbM, PsbT, PsbX, PsbY, PsbZ, Psb30/Ycf12, at least 3 peripheral proteins of the oxygen-evolving complex and a large number of cofactors. It forms dimeric complexes. It depends on The D1/D2 heterodimer binds P680, chlorophylls that are the primary electron donor of PSII, and subsequent electron acceptors. It shares a non-heme iron and each subunit binds pheophytin, quinone, additional chlorophylls, carotenoids and lipids. There is also a Cl(-1) ion associated with D1 and D2, which is required for oxygen evolution. The PSII complex binds additional chlorophylls, carotenoids and specific lipids. as a cofactor.

It is found in the plastid. The protein localises to the chloroplast thylakoid membrane. The enzyme catalyses 2 a plastoquinone + 4 hnu + 2 H2O = 2 a plastoquinol + O2. Functionally, photosystem II (PSII) is a light-driven water:plastoquinone oxidoreductase that uses light energy to abstract electrons from H(2)O, generating O(2) and a proton gradient subsequently used for ATP formation. It consists of a core antenna complex that captures photons, and an electron transfer chain that converts photonic excitation into a charge separation. The D1/D2 (PsbA/PsbD) reaction center heterodimer binds P680, the primary electron donor of PSII as well as several subsequent electron acceptors. D2 is needed for assembly of a stable PSII complex. The chain is Photosystem II D2 protein from Zygnema circumcarinatum (Green alga).